Here is a 441-residue protein sequence, read N- to C-terminus: Protein translocase subunit SecY (441 aa).

10 helical membrane passes run Y25 to I45, I78 to L98, L126 to L146, I155 to L175, I184 to F204, V218 to I238, V275 to F295, Y318 to F338, F376 to M396, and V398 to I418.

This sequence belongs to the SecY/SEC61-alpha family. In terms of assembly, component of the Sec protein translocase complex. Heterotrimer consisting of SecY, SecE and SecG subunits. The heterotrimers can form oligomers, although 1 heterotrimer is thought to be able to translocate proteins. Interacts with the ribosome. Interacts with SecDF, and other proteins may be involved. Interacts with SecA.

It localises to the cell membrane. Its function is as follows. The central subunit of the protein translocation channel SecYEG. Consists of two halves formed by TMs 1-5 and 6-10. These two domains form a lateral gate at the front which open onto the bilayer between TMs 2 and 7, and are clamped together by SecE at the back. The channel is closed by both a pore ring composed of hydrophobic SecY resides and a short helix (helix 2A) on the extracellular side of the membrane which forms a plug. The plug probably moves laterally to allow the channel to open. The ring and the pore may move independently. This is Protein translocase subunit SecY from Buchnera aphidicola subsp. Baizongia pistaciae (strain Bp).